The primary structure comprises 293 residues: Glutamyl-Q tRNA(Asp) synthetase (293 aa).

Residues 26-30 (RYAPS) and D62 each bind L-glutamate. Positions 29–39 (PSPTGALHLGN) match the 'HIGH' region motif. Zn(2+) contacts are provided by C118, C120, Y131, and C135. The L-glutamate site is built by Y178 and R196. A 'KMSKS' region motif is present at residues 234–238 (KLSKR). K237 contacts ATP.

It belongs to the class-I aminoacyl-tRNA synthetase family. GluQ subfamily. It depends on Zn(2+) as a cofactor.

Functionally, catalyzes the tRNA-independent activation of glutamate in presence of ATP and the subsequent transfer of glutamate onto a tRNA(Asp). Glutamate is transferred on the 2-amino-5-(4,5-dihydroxy-2-cyclopenten-1-yl) moiety of the queuosine in the wobble position of the QUC anticodon. In Parasynechococcus marenigrum (strain WH8102), this protein is Glutamyl-Q tRNA(Asp) synthetase.